The chain runs to 195 residues: MELNTHNAEILLSAANKSHYPQDELPEIALAGRSNVGKSSFINTMLNRKNLARTSGKPGKTQLLNFFNIDDKMRFVDVPGYGYARVSKKEREKWGRMIEEYLTTRENLRAVVSLVDLRHDPSADDVQMYEFLKYYEIPVIIVATKADKIPRGKWNKHESAIKKKLNFDPSDDFILFSSVSKAGMDEAWDAILEKL.

In terms of domain architecture, EngB-type G spans 24 to 195; the sequence is ELPEIALAGR…EAWDAILEKL (172 aa). GTP is bound by residues 32 to 39, 59 to 63, 77 to 80, 144 to 147, and 176 to 178; these read GRSNVGKS, GKTQL, DVPG, TKAD, and FSS. Mg(2+) is bound by residues S39 and T61.

Belongs to the TRAFAC class TrmE-Era-EngA-EngB-Septin-like GTPase superfamily. EngB GTPase family. Mg(2+) is required as a cofactor.

Necessary for normal cell division and for the maintenance of normal septation. The chain is Probable GTP-binding protein EngB from Streptococcus pneumoniae (strain ATCC 700669 / Spain 23F-1).